The chain runs to 360 residues: D-alanine--D-alanine ligase (360 aa).

The ATP-grasp domain occupies 139–344; it reads KDVFAQAGLA…YPELIEKLVS (206 aa). 172 to 227 is an ATP binding site; that stretch reads EQVLGYPCFVKPANMGSSVGISKCRSKEELQTAFDLAFQYDRRVVVEEGVVGREIE. Aspartate 298, glutamate 311, and asparagine 313 together coordinate Mg(2+).

This sequence belongs to the D-alanine--D-alanine ligase family. The cofactor is Mg(2+). It depends on Mn(2+) as a cofactor.

It localises to the cytoplasm. It catalyses the reaction 2 D-alanine + ATP = D-alanyl-D-alanine + ADP + phosphate + H(+). It functions in the pathway cell wall biogenesis; peptidoglycan biosynthesis. Its function is as follows. Cell wall formation. The sequence is that of D-alanine--D-alanine ligase from Bacillus pumilus (strain SAFR-032).